We begin with the raw amino-acid sequence, 164 residues long: Putative lung carcinoma-associated protein 10 (164 aa).

The tract at residues 1–164 (MSSCPVHDCP…TQKPQTTVGQ (164 aa)) is disordered. Low complexity predominate over residues 23 to 40 (GSRGALRLRGGAPGSAAG). Positions 152–164 (MQKTQKPQTTVGQ) are enriched in polar residues.

The protein is Putative lung carcinoma-associated protein 10 (LCA10) of Homo sapiens (Human).